The sequence spans 351 residues: Peptide chain release factor 1 (351 aa).

Gln-233 carries the post-translational modification N5-methylglutamine.

Belongs to the prokaryotic/mitochondrial release factor family. Methylated by PrmC. Methylation increases the termination efficiency of RF1.

The protein localises to the cytoplasm. Peptide chain release factor 1 directs the termination of translation in response to the peptide chain termination codons UAG and UAA. The sequence is that of Peptide chain release factor 1 from Treponema pallidum subsp. pallidum (strain SS14).